Consider the following 412-residue polypeptide: Gamma-glutamyl phosphate reductase (412 aa).

This sequence belongs to the gamma-glutamyl phosphate reductase family.

The protein localises to the cytoplasm. It carries out the reaction L-glutamate 5-semialdehyde + phosphate + NADP(+) = L-glutamyl 5-phosphate + NADPH + H(+). It participates in amino-acid biosynthesis; L-proline biosynthesis; L-glutamate 5-semialdehyde from L-glutamate: step 2/2. Functionally, catalyzes the NADPH-dependent reduction of L-glutamate 5-phosphate into L-glutamate 5-semialdehyde and phosphate. The product spontaneously undergoes cyclization to form 1-pyrroline-5-carboxylate. This is Gamma-glutamyl phosphate reductase from Lactiplantibacillus plantarum (strain ATCC BAA-793 / NCIMB 8826 / WCFS1) (Lactobacillus plantarum).